The following is a 90-amino-acid chain: Neurotoxin LmNaTx19 (90 aa).

The N-terminal stretch at 1-19 is a signal peptide; it reads MNHLILIVAMCLMVIGVQC. Residues 21 to 80 form the LCN-type CS-alpha/beta domain; it reads KDGYLYDDVDCKFSCWDNEYCRKLCKSKKAVGGYCWRWRFSCYCTGLPDNEKTEGTYKCG. 4 disulfides stabilise this stretch: cysteine 31–cysteine 79, cysteine 35–cysteine 55, cysteine 41–cysteine 62, and cysteine 45–cysteine 64.

The protein belongs to the long (4 C-C) scorpion toxin superfamily. Sodium channel inhibitor family. Alpha subfamily. Expressed by the venom gland.

The protein localises to the secreted. In terms of biological role, binds voltage-independently at site-3 of voltage-gated sodium channels (Nav) and inhibits the inactivation of the activated channels, thereby blocking neuronal transmission. The protein is Neurotoxin LmNaTx19 of Lychas mucronatus (Chinese swimming scorpion).